The chain runs to 152 residues: MTITDLVLILFIAALLAYALYDQFIMPRRNGPTLLSIALLRRGRVDSVIFVGLVAILIYNNVTSHGAQMTTWLLSALALMGFYIFWIRTPRIIFKQRGFFFANVWIEYNRIKEMNLSEDGVLVMQLEQRRLLIRVRNIDDLEKIYKILIENQ.

3 helical membrane-spanning segments follow: residues 6–26 (LVLI…QFIM), 45–65 (VDSV…VTSH), and 67–87 (AQMT…IFWI).

Belongs to the UPF0266 family.

The protein localises to the cell inner membrane. This is UPF0266 membrane protein YobD from Salmonella newport (strain SL254).